Here is a 955-residue protein sequence, read N- to C-terminus: Translation initiation factor IF-2 (955 aa).

The segment at 49-352 (AFSQSSESTE…QAPSFGGVKI (304 aa)) is disordered. Residues 77–88 (PQQQTKASAPSA) are compositionally biased toward low complexity. Pro residues-rich tracts occupy residues 95-121 (PAVP…PGPR), 149-159 (RPVPKPGPRPG), 188-202 (RPGP…PPRP), and 209-223 (PPRP…PRPG). The span at 225–235 (GTAGGRPGSSA) shows a compositional bias: gly residues. Residues 238 to 264 (PPRPVPRPGPRPSPMNMPASRPTPPGG) show a composition bias toward pro residues. Positions 273 to 322 (SGGGRGRGGGGGAGPRGGGAGGGAPRTGFGGRPGGGRGRGGTAGAFGRPG) are enriched in gly residues. Residues 326-335 (SRSRKSKKQR) are compositionally biased toward basic residues. Residues 448–620 (PRAPVVTVMG…IILTADAELD (173 aa)) enclose the tr-type G domain. A G1 region spans residues 457–464 (GHVDHGKT). GTP is bound at residue 457 to 464 (GHVDHGKT). The interval 482 to 486 (GITQH) is G2. The G3 stretch occupies residues 507–510 (DTPG). Residues 507–511 (DTPGH) and 561–564 (NKID) each bind GTP. Residues 561 to 564 (NKID) form a G4 region. The G5 stretch occupies residues 597–599 (SAK).

This sequence belongs to the TRAFAC class translation factor GTPase superfamily. Classic translation factor GTPase family. IF-2 subfamily.

The protein localises to the cytoplasm. In terms of biological role, one of the essential components for the initiation of protein synthesis. Protects formylmethionyl-tRNA from spontaneous hydrolysis and promotes its binding to the 30S ribosomal subunits. Also involved in the hydrolysis of GTP during the formation of the 70S ribosomal complex. This Thermobifida fusca (strain YX) protein is Translation initiation factor IF-2.